The primary structure comprises 204 residues: MTDETAKNGPDAAADAQIEPQVQEETNSTAEDAGQDNNPTAALQAENAELRDRFLRLAAEMDNLRRRTERDVKDAKSYAVTAFARDMLAVSDNLRRAIDAVPAEAKEEAQAGLTALIEGVEMTERAMLSTLERHGVRKIEPEGQKFDPNFHQAMFEIPNPQVPNNTVVQVVQPGYTIGDRVLRPAMVGVAKGGPKAETAQAADA.

The interval 1–42 (MTDETAKNGPDAAADAQIEPQVQEETNSTAEDAGQDNNPTAA) is disordered. Positions 23–41 (QEETNSTAEDAGQDNNPTA) are enriched in polar residues.

The protein belongs to the GrpE family. In terms of assembly, homodimer.

Its subcellular location is the cytoplasm. Its function is as follows. Participates actively in the response to hyperosmotic and heat shock by preventing the aggregation of stress-denatured proteins, in association with DnaK and GrpE. It is the nucleotide exchange factor for DnaK and may function as a thermosensor. Unfolded proteins bind initially to DnaJ; upon interaction with the DnaJ-bound protein, DnaK hydrolyzes its bound ATP, resulting in the formation of a stable complex. GrpE releases ADP from DnaK; ATP binding to DnaK triggers the release of the substrate protein, thus completing the reaction cycle. Several rounds of ATP-dependent interactions between DnaJ, DnaK and GrpE are required for fully efficient folding. The chain is Protein GrpE from Allorhizobium ampelinum (strain ATCC BAA-846 / DSM 112012 / S4) (Agrobacterium vitis (strain S4)).